Here is a 690-residue protein sequence, read N- to C-terminus: Peroxidase (690 aa).

The first 20 residues, methionine 1–leucine 20, serve as a signal peptide directing secretion. A disulfide bond links cysteine 100 and cysteine 112. Residue histidine 185 is the Proton acceptor of the active site. N-linked (GlcNAc...) asparagine glycosylation occurs at asparagine 310. A disulfide bridge connects residues cysteine 315 and cysteine 324. Residue histidine 437 participates in heme b binding. Cystine bridges form between cysteine 536-cysteine 592 and cysteine 636-cysteine 662.

This sequence belongs to the peroxidase family. XPO subfamily. Requires heme b as cofactor.

The protein resides in the secreted. The enzyme catalyses 2 a phenolic donor + H2O2 = 2 a phenolic radical donor + 2 H2O. Involved in the chorion hardening process, through protein cross-linking mediated by the formation of di- and tri-tyrosine bonds. The protein is Peroxidase (Pxd) of Drosophila melanogaster (Fruit fly).